Consider the following 550-residue polypeptide: Arginine--tRNA ligase (550 aa).

The short motif at 130–140 is the 'HIGH' region element; sequence ANPTGPIHIGG.

It belongs to the class-I aminoacyl-tRNA synthetase family. In terms of assembly, monomer.

It is found in the cytoplasm. It carries out the reaction tRNA(Arg) + L-arginine + ATP = L-arginyl-tRNA(Arg) + AMP + diphosphate. The polypeptide is Arginine--tRNA ligase (Mycobacterium sp. (strain KMS)).